A 132-amino-acid polypeptide reads, in one-letter code: MADLDNSQDWLEALKWDADGMIPAIAQDENGRVVMFAYMNRDSLQETVLCGNAVYWSRSRKRLWRKGEESGHFQKVNSIRTDCDGDVLLLSIEQVGGIACHTGRESCFFNELNGDRWIPADPVLKDPKEIYK.

Asp-82 contributes to the Mg(2+) binding site. Cys-83 serves as a coordination point for Zn(2+). Asp-84 and Asp-86 together coordinate Mg(2+). Positions 100 and 107 each coordinate Zn(2+).

This sequence belongs to the PRA-CH family. As to quaternary structure, homodimer. Mg(2+) is required as a cofactor. Zn(2+) serves as cofactor.

The protein localises to the cytoplasm. The enzyme catalyses 1-(5-phospho-beta-D-ribosyl)-5'-AMP + H2O = 1-(5-phospho-beta-D-ribosyl)-5-[(5-phospho-beta-D-ribosylamino)methylideneamino]imidazole-4-carboxamide. The protein operates within amino-acid biosynthesis; L-histidine biosynthesis; L-histidine from 5-phospho-alpha-D-ribose 1-diphosphate: step 3/9. In terms of biological role, catalyzes the hydrolysis of the adenine ring of phosphoribosyl-AMP. The protein is Phosphoribosyl-AMP cyclohydrolase of Dechloromonas aromatica (strain RCB).